The following is a 92-amino-acid chain: UPF0250 protein Avin_08440 (92 aa).

Belongs to the UPF0250 family.

The sequence is that of UPF0250 protein Avin_08440 from Azotobacter vinelandii (strain DJ / ATCC BAA-1303).